A 104-amino-acid polypeptide reads, in one-letter code: MGIDPNYRQNRQVVGEHEGHKIYGPVEPPGKLGIHGTIVGVDFDVCIADGSCINACPVNVFQWFDTPGHPASEKKADPINEKACIFCMACVNVCPVAAIDVKPP.

The segment at 2–37 is N-terminal extension; the sequence is GIDPNYRQNRQVVGEHEGHKIYGPVEPPGKLGIHGT. 3 residues coordinate Zn(2+): histidine 17, histidine 20, and histidine 35. 4Fe-4S ferredoxin-type domains follow at residues 38 to 66 and 75 to 104; these read IVGVDFDVCIADGSCINACPVNVFQWFDT and KADPINEKACIFCMACVNVCPVAAIDVKPP. Residues cysteine 46 and cysteine 52 each coordinate [3Fe-4S] cluster. Cysteine 56 is a binding site for [4Fe-4S] cluster. Aspartate 77 serves as a coordination point for Zn(2+). 3 residues coordinate [4Fe-4S] cluster: cysteine 84, cysteine 87, and cysteine 90. Residue cysteine 94 coordinates [3Fe-4S] cluster.

It depends on [3Fe-4S] cluster as a cofactor. [4Fe-4S] cluster is required as a cofactor. Zn(2+) serves as cofactor.

Ferredoxins are iron-sulfur proteins that transfer electrons in a wide variety of metabolic reactions. The sequence is that of Zinc-containing ferredoxin-2 (zfx2) from Sulfurisphaera tokodaii (strain DSM 16993 / JCM 10545 / NBRC 100140 / 7) (Sulfolobus tokodaii).